A 393-amino-acid polypeptide reads, in one-letter code: MSAPPKRFGLIVKQKEEPKRAPVRVSSVFGDDDDDEAPATATNTSSASVIRIQKAAEREHQKAEAEDPTIFDYDGNYDEIQAIKNEKKEEARKADKNKESKYAEAIIKAHARRQLEQFSREERQQIKEREKEAGEFDDKEVFVTGAYRKQQEEVKKYREQEAEEAAFNDMTSVQKQKMWEMGMGRTLLNDLARDPTAIKQRKMEKKNVRKREDSGDEEEQKEDVKKKEEPKKKSIYDTDSEDDEKKSKAPEAPKKNFEGELKAGLNLVTKKATTHAERIRQRNFTPTPPSSDDEAPKPAPRAVGDHRRSTSPRRSRDHAQRNQREKTKSKSPEPPKAQKTSLKDKLKPKRIDKAARLDGLKAILAQRNTEKDIEEARQRYFERREQGLVVPPL.

The disordered stretch occupies residues 1–49 (MSAPPKRFGLIVKQKEEPKRAPVRVSSVFGDDDDDEAPATATNTSSASV). A compositionally biased stretch (low complexity) spans 39-48 (ATATNTSSAS). A coiled-coil region spans residues 76–166 (NYDEIQAIKN…YREQEAEEAA (91 aa)). The segment at 187–350 (LLNDLARDPT…SLKDKLKPKR (164 aa)) is disordered. A compositionally biased stretch (basic residues) spans 199–209 (KQRKMEKKNVR). Basic and acidic residues-rich tracts occupy residues 222-236 (EDVK…KSIY), 243-261 (DEKK…EGEL), 317-333 (DHAQ…KSPE), and 341-350 (SLKDKLKPKR).

Belongs to the NSRP1 family.

The sequence is that of Nuclear speckle splicing regulatory protein 1 homolog from Caenorhabditis briggsae.